The sequence spans 236 residues: tRNA (guanine-N(7)-)-methyltransferase (236 aa).

Over residues 1-17 (MSERKSDPDRDDSERAF) the composition is skewed to basic and acidic residues. A disordered region spans residues 1–23 (MSERKSDPDRDDSERAFFGRRKG). Residues E67, E92, D119, and D141 each coordinate S-adenosyl-L-methionine. D141 is a catalytic residue. Substrate contacts are provided by K145 and D177.

It belongs to the class I-like SAM-binding methyltransferase superfamily. TrmB family.

It carries out the reaction guanosine(46) in tRNA + S-adenosyl-L-methionine = N(7)-methylguanosine(46) in tRNA + S-adenosyl-L-homocysteine. The protein operates within tRNA modification; N(7)-methylguanine-tRNA biosynthesis. Its function is as follows. Catalyzes the formation of N(7)-methylguanine at position 46 (m7G46) in tRNA. The chain is tRNA (guanine-N(7)-)-methyltransferase from Bradyrhizobium diazoefficiens (strain JCM 10833 / BCRC 13528 / IAM 13628 / NBRC 14792 / USDA 110).